Reading from the N-terminus, the 370-residue chain is Succinoglycan biosynthesis protein ExoH (370 aa).

10 helical membrane passes run 14–34, 46–66, 88–108, 144–164, 170–190, 193–213, 216–236, 244–264, 282–302, and 307–327; these read ILLI…WSPF, VFLG…ISGY, TVLL…YAIQ, LYFL…ALLV, VTLL…IFLK, ILFG…IKML, FAAP…VGLY, LWLD…SWAI, GLSF…WMIW, and LSYY…ILVA. The segment at 350–370 is disordered; the sequence is AKRMATQPPQGAQAGYSPQQR.

Belongs to the acyltransferase 3 family.

The protein resides in the cell membrane. Its pathway is glycan metabolism; exopolysaccharide biosynthesis. In terms of biological role, required for the succinyl modification of the seventh sugar (glucose) of the octasaccharide subunit of succinoglycan (EPS I). The protein is Succinoglycan biosynthesis protein ExoH (exoH) of Rhizobium meliloti (strain 1021) (Ensifer meliloti).